Reading from the N-terminus, the 364-residue chain is Polygalacturonase (364 aa).

The signal sequence occupies residues 1 to 21 (MVAYALTSMLLSAGALVAAAP). The propeptide occupies 22-27 (SGLDAR). Cys-30 and Cys-45 form a disulfide bridge. 6 PbH1 repeats span residues 158–188 (VTGL…DIGS), 189–210 (SSGI…AINS), 211–231 (GSDI…SIGS), 240–261 (VKGV…RIKT), 269–291 (VSDI…VIEQ), and 303–348 (TTGV…SITG). The active-site Proton donor is Asp-203. An intrachain disulfide couples Cys-205 to Cys-221. His-225 is a catalytic residue. Asn-276 is a glycosylation site (N-linked (GlcNAc...) asparagine). An intrachain disulfide couples Cys-331 to Cys-336. N-linked (GlcNAc...) asparagine glycosylation occurs at Asn-340. Cysteines 355 and 364 form a disulfide.

This sequence belongs to the glycosyl hydrolase 28 family.

Its subcellular location is the secreted. It catalyses the reaction (1,4-alpha-D-galacturonosyl)n+m + H2O = (1,4-alpha-D-galacturonosyl)n + (1,4-alpha-D-galacturonosyl)m.. Its function is as follows. Involved in maceration and soft-rotting of plant tissue. Hydrolyzes the 1,4-alpha glycosidic bonds of de-esterified pectate in the smooth region of the plant cell wall. The protein is Polygalacturonase (PGN1) of Cochliobolus carbonum (Maize leaf spot fungus).